Here is a 310-residue protein sequence, read N- to C-terminus: Putative S-adenosyl-L-methionine-dependent methyltransferase Franean1_4929 (310 aa).

A disordered region spans residues 1–28 (MSRPSAPRGRTELRSIHERGHERGSAGV). Residues 9-24 (GRTELRSIHERGHERG) are compositionally biased toward basic and acidic residues. Residues D136 and 165–166 (DL) each bind S-adenosyl-L-methionine.

This sequence belongs to the UPF0677 family.

In terms of biological role, exhibits S-adenosyl-L-methionine-dependent methyltransferase activity. The protein is Putative S-adenosyl-L-methionine-dependent methyltransferase Franean1_4929 of Parafrankia sp. (strain EAN1pec).